Consider the following 298-residue polypeptide: Acetylglutamate kinase (298 aa).

Substrate-binding positions include 69–70 (GG), R91, and N196.

It belongs to the acetylglutamate kinase family. ArgB subfamily.

Its subcellular location is the cytoplasm. It catalyses the reaction N-acetyl-L-glutamate + ATP = N-acetyl-L-glutamyl 5-phosphate + ADP. It functions in the pathway amino-acid biosynthesis; L-arginine biosynthesis; N(2)-acetyl-L-ornithine from L-glutamate: step 2/4. In terms of biological role, catalyzes the ATP-dependent phosphorylation of N-acetyl-L-glutamate. The protein is Acetylglutamate kinase of Granulibacter bethesdensis (strain ATCC BAA-1260 / CGDNIH1).